Consider the following 534-residue polypeptide: Unguisins hydrolase ungD' (534 aa).

The protein belongs to the peptidase S12 family.

It functions in the pathway secondary metabolite biosynthesis. In terms of biological role, hydrolase; part of the gene cluster that mediates the biosynthesis of the unguisins, gamma-aminobutyric acid (GABA)-containing fungal cyclic heptapeptides with the amino acid sequence cyclo-(D-Ala1-D-Val2-L-Leu3-beta-MePhe4-D-Ala5-D-Trp6-GABA7) for unguisin H and cyclo-(D-Ala1-D-Ala2-L-Leu3-beta-MePhe4-D-Ala5-D-Trp6-GABA7) for unguisin I. Within the pathway, the hydrolase ungD' catalyzes the hydrolysis between the D-tryptophan and GABA residues of unguisins H and I to produce the corresponding linear peptides. The alanine racemase ungC' catalyzes the interconversion of L-alanine and D-alanine, providing the D-alanine which is accepted by the first adenylation domain of the nonribosomal peptide synthetase (NRPS) ungA', whereas the methyltransferase ungE' provides the (2R,3R)-beta-methylphenylalanine residue incorporated by the module 4. UngA' is the main enzyme within the cluster which condenses the 7 residues using its respective 7 modules. The terminal condensation domain (Ct) is involved in cyclization with D-alanine and thereby releasing of unguisins H and I. This is Unguisins hydrolase ungD' from Aspergillus campestris (strain IBT 28561).